The chain runs to 122 residues: Large ribosomal subunit protein uL14 (122 aa).

Belongs to the universal ribosomal protein uL14 family. Part of the 50S ribosomal subunit. Forms a cluster with proteins L3 and L19. In the 70S ribosome, L14 and L19 interact and together make contacts with the 16S rRNA in bridges B5 and B8.

In terms of biological role, binds to 23S rRNA. Forms part of two intersubunit bridges in the 70S ribosome. The chain is Large ribosomal subunit protein uL14 from Methylobacterium radiotolerans (strain ATCC 27329 / DSM 1819 / JCM 2831 / NBRC 15690 / NCIMB 10815 / 0-1).